Consider the following 279-residue polypeptide: Pantothenate synthetase (279 aa).

An ATP-binding site is contributed by 26–33; that stretch reads MGGLHEGH. H33 acts as the Proton donor in catalysis. Q57 contacts (R)-pantoate. Q57 contacts beta-alanine. 143–146 is an ATP binding site; it reads GKKD. Q149 provides a ligand contact to (R)-pantoate. ATP contacts are provided by residues V172 and 180-183; that span reads LSSR.

This sequence belongs to the pantothenate synthetase family. In terms of assembly, homodimer.

It is found in the cytoplasm. It carries out the reaction (R)-pantoate + beta-alanine + ATP = (R)-pantothenate + AMP + diphosphate + H(+). The protein operates within cofactor biosynthesis; (R)-pantothenate biosynthesis; (R)-pantothenate from (R)-pantoate and beta-alanine: step 1/1. Its function is as follows. Catalyzes the condensation of pantoate with beta-alanine in an ATP-dependent reaction via a pantoyl-adenylate intermediate. In Nitrosospira multiformis (strain ATCC 25196 / NCIMB 11849 / C 71), this protein is Pantothenate synthetase.